Reading from the N-terminus, the 868-residue chain is Muscle, skeletal receptor tyrosine protein kinase (868 aa).

Positions Met-1–Thr-21 are cleaved as a signal peptide. Residues Glu-22–Thr-494 are Extracellular-facing. Ig-like domains are found at residues Pro-28–Gln-116, Pro-121–Lys-205, and Ala-212–Ser-302. 3 disulfide bridges follow: Cys-49/Cys-99, Cys-98/Cys-112, and Cys-142/Cys-190. Asn-222 is a glycosylation site (N-linked (GlcNAc...) asparagine). Cystine bridges form between Cys-233–Cys-282, Cys-317–Cys-382, Cys-325–Cys-375, Cys-366–Cys-406, Cys-394–Cys-447, and Cys-398–Cys-434. In terms of domain architecture, FZ spans Glu-312 to Leu-450. Asn-338 carries N-linked (GlcNAc...) asparagine glycosylation. A glycan (N-linked (GlcNAc...) asparagine) is linked at Asn-459. The chain crosses the membrane as a helical span at residues Val-495 to Tyr-515. The Cytoplasmic segment spans residues Cys-516–Val-868. Tyr-553 bears the Phosphotyrosine; by autocatalysis mark. A Protein kinase domain is found at Ile-574–Leu-855. Residues Ile-580–Val-588 and Lys-608 each bind ATP. Residues Ser-680 and Ser-697 each carry the phosphoserine; by CK2 modification. Asp-724 functions as the Proton acceptor in the catalytic mechanism. Position 754 is a phosphotyrosine; by autocatalysis (Tyr-754).

Belongs to the protein kinase superfamily. Tyr protein kinase family. Monomer. Homodimer. Interacts with LRP4; the heterodimer forms an AGRIN receptor complex that binds AGRIN resulting in activation of MUSK. Forms a heterotetramer composed of 2 DOK7 and 2 MUSK molecules which facilitates MUSK trans-autophosphorylation on tyrosine residue and activation. Interacts (via cytoplasmic part) with DOK7 (via IRS-type PTB domain); requires MUSK phosphorylation. Interacts with DVL1 (via DEP domain); the interaction is direct and mediates the formation of a DVL1, MUSK and PAK1 ternary complex involved in AChR clustering. Interacts with PDZRN3; this interaction is enhanced by agrin. Interacts with FNTA; the interaction is direct and mediates AGRIN-induced phosphorylation and activation of FNTA. Interacts with CSNK2B; mediates regulation by CK2. Interacts (via the cytoplasmic domain) with DNAJA3. Interacts with NSF; may regulate MUSK endocytosis and activity. Interacts with CAV3; may regulate MUSK signaling. Interacts with RNF31. Interacts with DOK7. Mg(2+) serves as cofactor. Ubiquitinated by PDZRN3. Ubiquitination promotes endocytosis and lysosomal degradation. Post-translationally, phosphorylated. Phosphorylation is induced by AGRIN in a LRP4-dependent manner. Autophosphorylated. Autophosphorylation at Tyr-553 is required for interaction with DOK7 which in turn stimulates the phosphorylation and the activation of MUSK. In terms of processing, neddylated. As to expression, muscle specific.

The protein localises to the postsynaptic cell membrane. The enzyme catalyses L-tyrosyl-[protein] + ATP = O-phospho-L-tyrosyl-[protein] + ADP + H(+). Its activity is regulated as follows. Positively regulated by CK2. Receptor tyrosine kinase which plays a central role in the formation and the maintenance of the neuromuscular junction (NMJ), the synapse between the motor neuron and the skeletal muscle. Recruitment of AGRIN by LRP4 to the MUSK signaling complex induces phosphorylation and activation of MUSK, the kinase of the complex. The activation of MUSK in myotubes regulates the formation of NMJs through the regulation of different processes including the specific expression of genes in subsynaptic nuclei, the reorganization of the actin cytoskeleton and the clustering of the acetylcholine receptors (AChR) in the postsynaptic membrane. May regulate AChR phosphorylation and clustering through activation of ABL1 and Src family kinases which in turn regulate MUSK. DVL1 and PAK1 that form a ternary complex with MUSK are also important for MUSK-dependent regulation of AChR clustering. May positively regulate Rho family GTPases through FNTA. Mediates the phosphorylation of FNTA which promotes prenylation, recruitment to membranes and activation of RAC1 a regulator of the actin cytoskeleton and of gene expression. Other effectors of the MUSK signaling include DNAJA3 which functions downstream of MUSK. May also play a role within the central nervous system by mediating cholinergic responses, synaptic plasticity and memory formation. The polypeptide is Muscle, skeletal receptor tyrosine protein kinase (Musk) (Rattus norvegicus (Rat)).